Consider the following 160-residue polypeptide: ATP synthase subunit b (160 aa).

Residues 5–27 (IEQILTQIIAFLIMLGVLKKFVW) form a helical membrane-spanning segment.

It belongs to the ATPase B chain family. As to quaternary structure, F-type ATPases have 2 components, F(1) - the catalytic core - and F(0) - the membrane proton channel. F(1) has five subunits: alpha(3), beta(3), gamma(1), delta(1), epsilon(1). F(0) has three main subunits: a(1), b(2) and c(10-14). The alpha and beta chains form an alternating ring which encloses part of the gamma chain. F(1) is attached to F(0) by a central stalk formed by the gamma and epsilon chains, while a peripheral stalk is formed by the delta and b chains.

It is found in the cell inner membrane. F(1)F(0) ATP synthase produces ATP from ADP in the presence of a proton or sodium gradient. F-type ATPases consist of two structural domains, F(1) containing the extramembraneous catalytic core and F(0) containing the membrane proton channel, linked together by a central stalk and a peripheral stalk. During catalysis, ATP synthesis in the catalytic domain of F(1) is coupled via a rotary mechanism of the central stalk subunits to proton translocation. In terms of biological role, component of the F(0) channel, it forms part of the peripheral stalk, linking F(1) to F(0). In Protochlamydia amoebophila (strain UWE25), this protein is ATP synthase subunit b.